A 314-amino-acid chain; its full sequence is MGAGEKTAAGMPRIGMGTAVQGPKPDPIRRAVLRAIEIGYRHFDTAAHYETEAPIGEAAAEAVRSGAVASRDELFITSKLWCSDAHRDRVVPALRQSLRNLQMEYVDLYLVHWPVSMKPGRFKAPFTAEDFVPFDMRAVWEAMEECHRLGLAKAIGVANFSCKKLETLLSFATIPPTVNQVEVNPVWQQRKLREFCRGKGIQLCAYSPLGAKGTHWGSDAVMDAGVLQEIAASRGKSVAQVCLRWVYEQGDCLIVKSFDEARMRENLEVDGWELTEEERLRIAEIPQRKINLGKRYVSEHGPYKSLEELWDGEI.

The interval 1–21 (MGAGEKTAAGMPRIGMGTAVQ) is disordered. D44 provides a ligand contact to NADP(+). Catalysis depends on Y49, which acts as the Proton donor. A substrate-binding site is contributed by H112. NADP(+) is bound by residues 158–159 (AN), Q180, 258–266 (FDEARMREN), and 273–281 (ELTEEERLR).

This sequence belongs to the aldo/keto reductase family. In terms of tissue distribution, mostly expressed in root tissues, observed, at low levels, in mesocotyl and embryonic roots, seedling roots, crown and seedling leafes, mature bracts, anthers, pistil, caryopsis and embryos.

The catalysed reaction is 2'-deoxymugineate + NAD(+) = 3''-deamino-3''-oxonicotianamine + NADH + H(+). It carries out the reaction 2'-deoxymugineate + NADP(+) = 3''-deamino-3''-oxonicotianamine + NADPH + H(+). Its pathway is siderophore biosynthesis. Its function is as follows. Catalyzes the reduction of a 3''-keto intermediate during the biosynthesis of 2'-deoxymugineic acid (DMA) from L-Met. Involved in the formation of phytosiderophores (MAs) belonging to the mugineic acid family and required to acquire iron. This chain is Deoxymugineic acid synthase 1-D, found in Triticum aestivum (Wheat).